We begin with the raw amino-acid sequence, 134 residues long: Lymphocyte antigen 6 complex locus protein G6d (134 aa).

The signal sequence occupies residues 1 to 19; that stretch reads MNSQLIGILFSALLGAALG. The 100-residue stretch at 22 to 121 folds into the UPAR/Ly6 domain; the sequence is MRCYDCGGGP…ASSSTPLCIL (100 aa). Cystine bridges form between Cys24/Cys48, Cys27/Cys35, Cys42/Cys76, Cys82/Cys101, and Cys102/Cys107. Thr68 is a glycosylation site (O-linked (GalNAc...) threonine). Residue Asn108 is the site of GPI-anchor amidated asparagine attachment. Residues 109-134 constitute a propeptide, removed in mature form; it reads GAVASSSTPLCILAAVTTLAWLLSGQ.

In terms of assembly, homodimer. In terms of processing, O-glycosylated.

It is found in the cell membrane. This is Lymphocyte antigen 6 complex locus protein G6d (Ly6g6d) from Rattus norvegicus (Rat).